The sequence spans 285 residues: Probable endonuclease 4 (285 aa).

Residues His-69, His-109, Glu-145, Asp-179, His-182, His-216, Asp-229, His-231, and Glu-261 each contribute to the Zn(2+) site.

The protein belongs to the AP endonuclease 2 family. Zn(2+) serves as cofactor.

The catalysed reaction is Endonucleolytic cleavage to 5'-phosphooligonucleotide end-products.. Endonuclease IV plays a role in DNA repair. It cleaves phosphodiester bonds at apurinic or apyrimidinic (AP) sites, generating a 3'-hydroxyl group and a 5'-terminal sugar phosphate. This Yersinia pestis bv. Antiqua (strain Antiqua) protein is Probable endonuclease 4.